Here is a 348-residue protein sequence, read N- to C-terminus: Heat-inducible transcription repressor HrcA (348 aa).

The protein belongs to the HrcA family.

Its function is as follows. Negative regulator of class I heat shock genes (grpE-dnaK-dnaJ and groELS operons). Prevents heat-shock induction of these operons. In Ruminiclostridium cellulolyticum (strain ATCC 35319 / DSM 5812 / JCM 6584 / H10) (Clostridium cellulolyticum), this protein is Heat-inducible transcription repressor HrcA.